The primary structure comprises 110 residues: UPF0060 membrane protein BPSL1340 (110 aa).

A run of 4 helical transmembrane segments spans residues 9 to 29, 34 to 54, 64 to 84, and 86 to 106; these read ALFVLTAVAEIVGCYLPWLVL, PAWLLAPAALSLALFAWLLTL, AAYGGVYIAVALAWLRIVDGV, and LSRWDVAGAALALAGMSVIAL.

Belongs to the UPF0060 family.

The protein resides in the cell inner membrane. This is UPF0060 membrane protein BPSL1340 from Burkholderia pseudomallei (strain K96243).